The following is a 395-amino-acid chain: ATP phosphoribosyltransferase regulatory subunit (395 aa).

This sequence belongs to the class-II aminoacyl-tRNA synthetase family. HisZ subfamily. In terms of assembly, heteromultimer composed of HisG and HisZ subunits.

The protein resides in the cytoplasm. It functions in the pathway amino-acid biosynthesis; L-histidine biosynthesis; L-histidine from 5-phospho-alpha-D-ribose 1-diphosphate: step 1/9. In terms of biological role, required for the first step of histidine biosynthesis. May allow the feedback regulation of ATP phosphoribosyltransferase activity by histidine. In Pseudomonas putida (strain ATCC 700007 / DSM 6899 / JCM 31910 / BCRC 17059 / LMG 24140 / F1), this protein is ATP phosphoribosyltransferase regulatory subunit.